The following is a 220-amino-acid chain: Elongation factor Ts, chloroplastic (220 aa).

The protein belongs to the EF-Ts family.

It is found in the plastid. The protein localises to the chloroplast. Its function is as follows. Associates with the EF-Tu.GDP complex and induces the exchange of GDP to GTP. It remains bound to the aminoacyl-tRNA.EF-Tu.GTP complex up to the GTP hydrolysis stage on the ribosome. The sequence is that of Elongation factor Ts, chloroplastic (tsf) from Pyropia yezoensis (Susabi-nori).